The primary structure comprises 158 residues: NADPH-dependent 7-cyano-7-deazaguanine reductase (158 aa).

A disordered region spans residues 1–37 (MAKRSIKSETSPELQLGRPVTAPDSPETARLDRVPNP). The span at 27–37 (ETARLDRVPNP) shows a compositional bias: basic and acidic residues. Catalysis depends on cysteine 56, which acts as the Thioimide intermediate. Aspartate 63 acts as the Proton donor in catalysis. Residues 78–80 (VES) and 97–98 (HE) each bind substrate.

Belongs to the GTP cyclohydrolase I family. QueF type 1 subfamily.

It localises to the cytoplasm. The catalysed reaction is 7-aminomethyl-7-carbaguanine + 2 NADP(+) = 7-cyano-7-deazaguanine + 2 NADPH + 3 H(+). It participates in tRNA modification; tRNA-queuosine biosynthesis. Functionally, catalyzes the NADPH-dependent reduction of 7-cyano-7-deazaguanine (preQ0) to 7-aminomethyl-7-deazaguanine (preQ1). This is NADPH-dependent 7-cyano-7-deazaguanine reductase from Bradyrhizobium sp. (strain BTAi1 / ATCC BAA-1182).